Consider the following 129-residue polypeptide: Probable tautomerase YrdN (129 aa).

The Proton acceptor; via imino nitrogen role is filled by Pro-2.

Belongs to the 4-oxalocrotonate tautomerase family.

Functionally, putative target of GltR. The protein is Probable tautomerase YrdN (yrdN) of Bacillus subtilis (strain 168).